Consider the following 607-residue polypeptide: DNA primase (607 aa).

The segment at 39 to 63 (CPFHDDKNPSMSISSSKNIFKCWAC) adopts a CHC2-type zinc-finger fold. One can recognise a Toprim domain in the interval 267–350 (NQLFIVEGYF…IVEIVQWEHN (84 aa)). The Mg(2+) site is built by Glu273, Asp319, and Asp321.

It belongs to the DnaG primase family. As to quaternary structure, monomer. Interacts with DnaB. Zn(2+) serves as cofactor. It depends on Mg(2+) as a cofactor.

It catalyses the reaction ssDNA + n NTP = ssDNA/pppN(pN)n-1 hybrid + (n-1) diphosphate.. RNA polymerase that catalyzes the synthesis of short RNA molecules used as primers for DNA polymerase during DNA replication. The protein is DNA primase of Mycoplasma genitalium (strain ATCC 33530 / DSM 19775 / NCTC 10195 / G37) (Mycoplasmoides genitalium).